A 273-amino-acid polypeptide reads, in one-letter code: NH(3)-dependent NAD(+) synthetase (273 aa).

47-54 (GISGGQDS) lines the ATP pocket. Asp-53 serves as a coordination point for Mg(2+). Arg-139 is a binding site for deamido-NAD(+). Thr-159 contributes to the ATP binding site. Residue Glu-164 participates in Mg(2+) binding. Residues Lys-172 and Asp-179 each coordinate deamido-NAD(+). ATP-binding residues include Lys-188 and Thr-210. Residue 259–260 (HK) participates in deamido-NAD(+) binding.

This sequence belongs to the NAD synthetase family. As to quaternary structure, homodimer.

The catalysed reaction is deamido-NAD(+) + NH4(+) + ATP = AMP + diphosphate + NAD(+) + H(+). Its pathway is cofactor biosynthesis; NAD(+) biosynthesis; NAD(+) from deamido-NAD(+) (ammonia route): step 1/1. Catalyzes the ATP-dependent amidation of deamido-NAD to form NAD. Uses ammonia as a nitrogen source. This Staphylococcus aureus (strain COL) protein is NH(3)-dependent NAD(+) synthetase.